Consider the following 140-residue polypeptide: Hemoglobin subunit beta (140 aa).

In terms of domain architecture, Globin spans 1-140 (GSDLVSGFWG…VGDALAKAYH (140 aa)). Heme b-binding residues include histidine 57 and histidine 86.

The protein belongs to the globin family. As to quaternary structure, heterotetramer of two alpha chains and two beta chains. In terms of tissue distribution, red blood cells.

Involved in oxygen transport from the lung to the various peripheral tissues. This Pelophylax lessonae (Pool frog) protein is Hemoglobin subunit beta (HBB).